We begin with the raw amino-acid sequence, 107 residues long: Large ribosomal subunit protein uL24 (107 aa).

Belongs to the universal ribosomal protein uL24 family. As to quaternary structure, part of the 50S ribosomal subunit.

Its function is as follows. One of two assembly initiator proteins, it binds directly to the 5'-end of the 23S rRNA, where it nucleates assembly of the 50S subunit. Functionally, one of the proteins that surrounds the polypeptide exit tunnel on the outside of the subunit. The sequence is that of Large ribosomal subunit protein uL24 from Mesomycoplasma hyopneumoniae (strain 7448) (Mycoplasma hyopneumoniae).